The following is an 85-amino-acid chain: ALVLLAFQVQADPIQNTDEETKTEEQPGEDDQAVSVSFGDPEGSSLQEESLRDLVCYCRTRGCKRRERMNGTCRKGHLMHTLCCR.

Positions 1 to 11 are cleaved as a signal peptide; the sequence is ALVLLAFQVQA. Positions 12-50 are excised as a propeptide; the sequence is DPIQNTDEETKTEEQPGEDDQAVSVSFGDPEGSSLQEES. The tract at residues 13–48 is disordered; that stretch reads PIQNTDEETKTEEQPGEDDQAVSVSFGDPEGSSLQE. 3 disulfide bridges follow: Cys56–Cys84, Cys58–Cys73, and Cys63–Cys83.

This sequence belongs to the alpha-defensin family. In terms of tissue distribution, paneth cells of the small bowel.

It is found in the secreted. Functionally, probably contributes to the antimicrobial barrier function of the small bowel mucosa. This Mus musculus (Mouse) protein is Alpha-defensin 14 (Defa14).